The sequence spans 92 residues: Small ribosomal subunit protein uS19 (92 aa).

The protein belongs to the universal ribosomal protein uS19 family.

Functionally, protein S19 forms a complex with S13 that binds strongly to the 16S ribosomal RNA. This chain is Small ribosomal subunit protein uS19, found in Methylocella silvestris (strain DSM 15510 / CIP 108128 / LMG 27833 / NCIMB 13906 / BL2).